Reading from the N-terminus, the 237-residue chain is 7-cyano-7-deazaguanine synthase (237 aa).

Phe14–Leu24 contributes to the ATP binding site. Positions 202, 217, 220, and 223 each coordinate Zn(2+).

Belongs to the QueC family. Requires Zn(2+) as cofactor.

It catalyses the reaction 7-carboxy-7-deazaguanine + NH4(+) + ATP = 7-cyano-7-deazaguanine + ADP + phosphate + H2O + H(+). The protein operates within purine metabolism; 7-cyano-7-deazaguanine biosynthesis. Its function is as follows. Catalyzes the ATP-dependent conversion of 7-carboxy-7-deazaguanine (CDG) to 7-cyano-7-deazaguanine (preQ(0)). The chain is 7-cyano-7-deazaguanine synthase from Rhodopseudomonas palustris (strain ATCC BAA-98 / CGA009).